A 791-amino-acid polypeptide reads, in one-letter code: Nuclear cap-binding protein subunit 1 (791 aa).

The segment covering 1–14 (MSRRRHSDENDGGP) has biased composition (basic and acidic residues). The segment at 1-24 (MSRRRHSDENDGGPHHKRRKTSEP) is disordered. One can recognise an MIF4G domain in the interval 28–240 (EDRLESLICR…CLWAQIQKLK (213 aa)). Residues 641–714 (LHSTIRKMNK…SEQKNLFLVI (74 aa)) are a coiled coil. The disordered stretch occupies residues 668-687 (KQHKHRDSDDNDEDSGRKDG).

Belongs to the NCBP1 family. In terms of assembly, component of the nuclear cap-binding complex (CBC), a heterodimer composed of ncbp1/cbp80 and ncbp2/cbp20 that interacts with m7GpppG-capped RNA. Component of an alternative nuclear cap-binding complex (CBC) composed of ncbp1/cbp80 and ncbp3.

The protein localises to the nucleus. Its subcellular location is the cytoplasm. Functionally, component of the cap-binding complex (CBC), which binds cotranscriptionally to the 5'-cap of pre-mRNAs and is involved in various processes such as pre-mRNA splicing, translation regulation, nonsense-mediated mRNA decay, RNA-mediated gene silencing (RNAi) by microRNAs (miRNAs) and mRNA export. The CBC complex is involved in mRNA export from the nucleus, leading to the recruitment of the mRNA export machinery to the 5'-end of mRNA and to mRNA export in a 5' to 3' direction through the nuclear pore. The CBC complex is also involved in mediating U snRNA and intronless mRNAs export from the nucleus. The CBC complex is essential for a pioneer round of mRNA translation, before steady state translation when the CBC complex is replaced by cytoplasmic cap-binding protein eIF4E. The pioneer round of mRNA translation mediated by the CBC complex plays a central role in nonsense-mediated mRNA decay (NMD), NMD only taking place in mRNAs bound to the CBC complex, but not on eIF4E-bound mRNAs. The CBC complex enhances NMD in mRNAs containing at least one exon-junction complex (EJC), promoting the interaction between UPF1 and UPF2. The CBC complex is also involved in 'failsafe' NMD, which is independent of the EJC complex, while it does not participate in Staufen-mediated mRNA decay (SMD). During cell proliferation, the CBC complex is also involved in microRNAs (miRNAs) biogenesis via its interaction with SRRT/ARS2 and is required for miRNA-mediated RNA interference. The CBC complex also acts as a negative regulator of parn, thereby acting as an inhibitor of mRNA deadenylation. In the CBC complex, ncbp1/cbp80 does not bind directly capped RNAs (m7GpppG-capped RNA) but is required to stabilize the movement of the N-terminal loop of ncbp2/cbp20 and lock the CBC into a high affinity cap-binding state with the cap structure. Associates with NCBP3 to form an alternative cap-binding complex (CBC) which plays a key role in mRNA export. The conventional CBC with NCBP2 binds both small nuclear RNA (snRNA) and messenger (mRNA) and is involved in their export from the nucleus whereas the alternative CBC with NCBP3 does not bind snRNA and associates only with mRNA thereby playing a role only in mRNA export. This chain is Nuclear cap-binding protein subunit 1 (ncbp1), found in Xenopus tropicalis (Western clawed frog).